Reading from the N-terminus, the 485-residue chain is Cysteine--tRNA ligase (485 aa).

C27 is a binding site for Zn(2+). Residues 29-39 carry the 'HIGH' region motif; sequence ITAYDLCHIGH. The Zn(2+) site is built by C208, H233, and E237. The short motif at 265 to 269 is the 'KMSKS' region element; sequence KMSKS. Residue K268 coordinates ATP.

The protein belongs to the class-I aminoacyl-tRNA synthetase family. As to quaternary structure, monomer. Zn(2+) serves as cofactor.

The protein localises to the cytoplasm. It catalyses the reaction tRNA(Cys) + L-cysteine + ATP = L-cysteinyl-tRNA(Cys) + AMP + diphosphate. This chain is Cysteine--tRNA ligase, found in Maridesulfovibrio salexigens (strain ATCC 14822 / DSM 2638 / NCIMB 8403 / VKM B-1763) (Desulfovibrio salexigens).